A 637-amino-acid chain; its full sequence is Early transcription factor 70 kDa subunit (637 aa).

The Helicase ATP-binding domain maps to 32–185 (RTIIDENRSV…GHIIDLMSEE (154 aa)). 45–52 (HIMGSGKT) contributes to the ATP binding site. The short motif at 135–138 (DKAH) is the DEXH box element. Positions 327-507 (KFKYFINRIQ…VLPFDIKKLL (181 aa)) constitute a Helicase C-terminal domain.

It belongs to the helicase family. VETF subfamily. Heterodimer of a 70 kDa and a 82 kDa subunit. Part of the early transcription complex composed of ETF, RAP94/OPG109, and the DNA-directed RNA polymerase.

The protein resides in the virion. Functionally, acts with RNA polymerase to initiate transcription from early gene promoters. Is recruited by the RPO-associated protein of 94 kDa RAP94/OPG109 to form the early transcription complex, which also contains the core RNA polymerase. ETF heterodimer binds to early gene promoters. In Homo sapiens (Human), this protein is Early transcription factor 70 kDa subunit (OPG118).